The chain runs to 262 residues: Serine/arginine-rich splicing factor 10 (262 aa).

The region spanning 10 to 88 (TSLFVRNVAD…RQIEIQFAQG (79 aa)) is the RRM domain. 3 positions are modified to phosphoserine: Ser-23, Ser-106, and Ser-108. Over residues 116 to 126 (YRRSRSRSYER) the composition is skewed to basic and acidic residues. Residues 116–262 (YRRSRSRSYE…SWTSPKSSGH (147 aa)) are disordered. Phosphoserine is present on residues Ser-129, Ser-131, and Ser-133. Over residues 134–150 (FDYNYRRSYSPRNSRPT) the composition is skewed to low complexity. 3 positions are modified to phosphoserine: Ser-158, Ser-160, and Arg-168. Basic residues-rich tracts occupy residues 165–186 (FKHRNRSFSRSKSNSRSRSKSQ) and 194–207 (KSRSRSASHTKTRG). The span at 209-234 (SKTDSKTHYKSGSRYEKESRKKEPPR) shows a compositional bias: basic and acidic residues. Over residues 252–262 (RSWTSPKSSGH) the composition is skewed to low complexity.

Belongs to the splicing factor SR family. In terms of assembly, the phosphorylated but not the dephosphorylated form interacts with TRA2B/SFRS10. The dephosphorylated form interacts with SNRNP70. Isoform 1 interacts with FUS C-terminus. Isoform 3 interacts with FUS C-terminus. Interacts with YTHDC1, leading to inhibit RNA-binding activity of SRSF10. In terms of processing, phosphorylated. Fully dephosphorylated in mitosis and partially dephosphorylated on heat shock. Widely expressed.

The protein localises to the nucleus speckle. It localises to the cytoplasm. Functionally, splicing factor that in its dephosphorylated form acts as a general repressor of pre-mRNA splicing. Seems to interfere with the U1 snRNP 5'-splice recognition of SNRNP70. Required for splicing repression in M-phase cells and after heat shock. Also acts as a splicing factor that specifically promotes exon skipping during alternative splicing. Interaction with YTHDC1, a RNA-binding protein that recognizes and binds N6-methyladenosine (m6A)-containing RNAs, prevents SRSF10 from binding to its mRNA-binding sites close to m6A-containing regions, leading to inhibit exon skipping during alternative splicing. May be involved in regulation of alternative splicing in neurons, with isoform 1 acting as a positive and isoform 3 as a negative regulator. This chain is Serine/arginine-rich splicing factor 10 (SRSF10), found in Homo sapiens (Human).